The sequence spans 697 residues: Glycine--tRNA ligase beta subunit (697 aa).

It belongs to the class-II aminoacyl-tRNA synthetase family. In terms of assembly, tetramer of two alpha and two beta subunits.

It is found in the cytoplasm. The enzyme catalyses tRNA(Gly) + glycine + ATP = glycyl-tRNA(Gly) + AMP + diphosphate. This chain is Glycine--tRNA ligase beta subunit, found in Cereibacter sphaeroides (strain ATCC 17023 / DSM 158 / JCM 6121 / CCUG 31486 / LMG 2827 / NBRC 12203 / NCIMB 8253 / ATH 2.4.1.) (Rhodobacter sphaeroides).